We begin with the raw amino-acid sequence, 502 residues long: ATP synthase subunit alpha (502 aa).

Residues 115-137 are disordered; that stretch reads VDGLGPVETTETRPIESPAPGVM. An ATP-binding site is contributed by 169 to 176; sequence GDRQTGKT.

This sequence belongs to the ATPase alpha/beta chains family. As to quaternary structure, F-type ATPases have 2 components, CF(1) - the catalytic core - and CF(0) - the membrane proton channel. CF(1) has five subunits: alpha(3), beta(3), gamma(1), delta(1), epsilon(1). CF(0) has three main subunits: a(1), b(2) and c(9-12). The alpha and beta chains form an alternating ring which encloses part of the gamma chain. CF(1) is attached to CF(0) by a central stalk formed by the gamma and epsilon chains, while a peripheral stalk is formed by the delta and b chains.

The protein localises to the cell membrane. The catalysed reaction is ATP + H2O + 4 H(+)(in) = ADP + phosphate + 5 H(+)(out). Functionally, produces ATP from ADP in the presence of a proton gradient across the membrane. The alpha chain is a regulatory subunit. The polypeptide is ATP synthase subunit alpha (Geobacillus kaustophilus (strain HTA426)).